The chain runs to 136 residues: uncharacterized protein (136 aa).

This is an uncharacterized protein from Frog virus 3 (isolate Goorha) (FV-3).